A 204-amino-acid chain; its full sequence is LexA repressor (204 aa).

The H-T-H motif DNA-binding region spans valine 27 to alanine 47. Residues serine 126 and lysine 164 each act as for autocatalytic cleavage activity in the active site.

It belongs to the peptidase S24 family. In terms of assembly, homodimer.

The catalysed reaction is Hydrolysis of Ala-|-Gly bond in repressor LexA.. In terms of biological role, represses a number of genes involved in the response to DNA damage (SOS response), including recA and lexA. In the presence of single-stranded DNA, RecA interacts with LexA causing an autocatalytic cleavage which disrupts the DNA-binding part of LexA, leading to derepression of the SOS regulon and eventually DNA repair. The sequence is that of LexA repressor from Listeria monocytogenes serotype 4b (strain CLIP80459).